A 262-amino-acid polypeptide reads, in one-letter code: MKRHEMVVAKHSALCSRFAQDLWLEQNIKDSFQKVTLSRYGKYGHKNLQLRKGCKSVDECKGHQGGFNGLNQCLKITTSKIFQCNKYVKVMHKFSNSNRHKIRHTENKHFRCKECDKSLCMLSRLTQHKKIHTRENFYKCEECGKTFNWSTNLSKPKKIHTGEKPYKCEVCGKAFHQSSILTKHKIIRTGEKPYKCAHCGKAFKQSSHLTRHKIIHTEEKPYKCEQCGKVFKQSPTLTKHQIIYTGEEPYKCEECGKAFNLS.

The segment at 110–132 (FRCKECDKSLCMLSRLTQHKKIH) adopts a C2H2-type 1 zinc-finger fold. The C2H2-type 2; degenerate zinc finger occupies 138–160 (YKCEECGKTFNWSTNLSKPKKIH). The C2H2-type 3; degenerate zinc-finger motif lies at 166–188 (YKCEVCGKAFHQSSILTKHKIIR). The segment at 194–216 (YKCAHCGKAFKQSSHLTRHKIIH) adopts a C2H2-type 4 zinc-finger fold. The C2H2-type 5; degenerate zinc-finger motif lies at 222 to 244 (YKCEQCGKVFKQSPTLTKHQIIY). The C2H2-type 6; degenerate zinc finger occupies 250–262 (YKCEECGKAFNLS).

This sequence belongs to the krueppel C2H2-type zinc-finger protein family.

Its subcellular location is the nucleus. May be involved in transcriptional regulation as a repressor. The sequence is that of Zinc finger protein 138 (ZNF138) from Homo sapiens (Human).